The chain runs to 546 residues: MAAKDVKFGRTAREKMLRGVDILADAVKVTLGPKGRNVVIEKSFGAPRITKDGVSVAKEVELEDKFENMGAQMLREVASKTNDTAGDGTTTATVLGQAIVQEGAKAVAAGMNPMDLKRGIDLAVNEVVAELLKKAKKINTSEEVAQVGTISANGEAEIGKMIAEAMQKVGNEGVITVEEAKTAETELEVVEGMQFDRGYLSPYFVTNPEKMVADLEDAYILLHEKKLSNLQALLPVLEAVVQTSKPLLIIAEDVEGEALATLVVNKLRGGLKIAAVKAPGFGDRRKAMLEDIAILTGGQVISEDLGIKLESVTLDMLGRAKKVSISKENTTIVDGAGQKAEIDARVGQIKQQIEETTSDYDREKLQERLAKLAGGVAVIRVGGATEVEVKEKKDRVDDALNATRAAVEEGIVAGGGTALLRASTKITAKGVNADQEAGINIVRRAIQAPARQITTNAGEEASVIVGKILENTSETFGYNTANGEYGDLISLGIVDPVKVVRTALQNAASVAGLLITTEAMIAELPKKDAAPAGMPGGMGGMGGMDF.

ATP-binding positions include 30–33 (TLGP), Lys-51, 87–91 (DGTTT), Gly-415, and Asp-495.

Belongs to the chaperonin (HSP60) family. As to quaternary structure, forms a cylinder of 14 subunits composed of two heptameric rings stacked back-to-back. Interacts with the co-chaperonin GroES.

Its subcellular location is the cytoplasm. The enzyme catalyses ATP + H2O + a folded polypeptide = ADP + phosphate + an unfolded polypeptide.. Together with its co-chaperonin GroES, plays an essential role in assisting protein folding. The GroEL-GroES system forms a nano-cage that allows encapsulation of the non-native substrate proteins and provides a physical environment optimized to promote and accelerate protein folding. The protein is Chaperonin GroEL of Brucella melitensis biotype 2 (strain ATCC 23457).